The primary structure comprises 412 residues: Double C2-like domain-containing protein beta (412 aa).

Residues 1–36 form a negatively regulates targeting to plasma membrane region; sequence MTLRRRGEKATISIQEHMAIDVCPGPIRPIKQISDY. The tract at residues 1 to 90 is mediates interaction with DYNLT1; that stretch reads MTLRRRGEKA…EDVDQLFGAY (90 aa). Residues 38–123 form a disordered region; the sequence is PRFPRGLPPT…PDADGYESDD (86 aa). Low complexity predominate over residues 49–73; that stretch reads APRASAPPDAPARSPAATAGPRSPS. The span at 95 to 108 shows a compositional bias: pro residues; sequence GPSPGPSPVRPPAK. Residues 112 to 123 are compositionally biased toward acidic residues; the sequence is DEPDADGYESDD. C2 domains follow at residues 126–250 and 266–399; these read ALGT…SICL and ERGR…ERWH. Ca(2+) is bound by residues Asp-157, Asp-163, Asp-218, Asp-220, Asp-297, Asp-303, Asp-357, Asp-359, and Asp-365. Residues 257 to 375 form a mediates interaction with STXBP3 region; the sequence is DKAEDKSLEE…FIGGVVLGIN (119 aa). The residue at position 411 (Ser-411) is a Phosphoserine.

Interacts with STX4; the interaction is calcium-dependent, increased by insulin and glucose, and mediates vesicle fusion with plasma membrane in pancreatic cells and adipocytes. Interacts with STXBP3; the interaction is direct, occurs at the cell membrane and regulates glucose-stimulated insulin secretion. Interacts with cytoplasmic dynein light chain DYNLT1. Interacts with the SNARE (soluble N-ethylmaleimide-sensitive factor attached protein receptor) complex composed of SNAP25, STX1A and VAMP2; the interaction is calcium-dependent and competitive with SYT1. May interact with UNC13A; the interaction mediates targeting to the plasma membrane. It depends on Ca(2+) as a cofactor. As to expression, expressed in brain; highly enriched in neurons.

It is found in the cytoplasm. Its subcellular location is the cytoplasmic granule. The protein resides in the cell membrane. Calcium sensor which positively regulates SNARE-dependent fusion of vesicles with membranes. Binds phospholipids in a calcium-dependent manner and may act at the priming stage of fusion by modifying membrane curvature to stimulate fusion. Involved in calcium-triggered exocytosis in chromaffin cells and calcium-dependent spontaneous release of neurotransmitter in absence of action potentials in neuronal cells. Involved both in glucose-stimulated insulin secretion in pancreatic cells and insulin-dependent GLUT4 transport to the plasma membrane in adipocytes. The polypeptide is Double C2-like domain-containing protein beta (Doc2b) (Rattus norvegicus (Rat)).